A 119-amino-acid chain; its full sequence is Large ribosomal subunit protein bL20 (119 aa).

The protein belongs to the bacterial ribosomal protein bL20 family.

In terms of biological role, binds directly to 23S ribosomal RNA and is necessary for the in vitro assembly process of the 50S ribosomal subunit. It is not involved in the protein synthesizing functions of that subunit. This is Large ribosomal subunit protein bL20 from Clostridium botulinum (strain Alaska E43 / Type E3).